The sequence spans 254 residues: Ubiquinone biosynthesis O-methyltransferase (254 aa).

The S-adenosyl-L-methionine site is built by Arg47, Gly76, Asp97, and Leu141.

The protein belongs to the methyltransferase superfamily. UbiG/COQ3 family.

It catalyses the reaction a 3-demethylubiquinol + S-adenosyl-L-methionine = a ubiquinol + S-adenosyl-L-homocysteine + H(+). It carries out the reaction a 3-(all-trans-polyprenyl)benzene-1,2-diol + S-adenosyl-L-methionine = a 2-methoxy-6-(all-trans-polyprenyl)phenol + S-adenosyl-L-homocysteine + H(+). The protein operates within cofactor biosynthesis; ubiquinone biosynthesis. Its function is as follows. O-methyltransferase that catalyzes the 2 O-methylation steps in the ubiquinone biosynthetic pathway. The polypeptide is Ubiquinone biosynthesis O-methyltransferase (Maricaulis maris (strain MCS10) (Caulobacter maris)).